The following is a 304-amino-acid chain: Nucleotide-binding protein SH2124 (304 aa).

Residue 19–26 (GLSGAGKS) participates in ATP binding. 70–73 (DLRG) is a binding site for GTP.

The protein belongs to the RapZ-like family.

In terms of biological role, displays ATPase and GTPase activities. The protein is Nucleotide-binding protein SH2124 of Staphylococcus haemolyticus (strain JCSC1435).